The sequence spans 368 residues: UDP-N-acetylglucosamine--N-acetylmuramyl-(pentapeptide) pyrophosphoryl-undecaprenol N-acetylglucosamine transferase (368 aa).

UDP-N-acetyl-alpha-D-glucosamine contacts are provided by residues Thr13–Gly15, Asn124, Arg167, Ser195, and Gln296.

Belongs to the glycosyltransferase 28 family. MurG subfamily.

It is found in the cell inner membrane. It catalyses the reaction di-trans,octa-cis-undecaprenyl diphospho-N-acetyl-alpha-D-muramoyl-L-alanyl-D-glutamyl-meso-2,6-diaminopimeloyl-D-alanyl-D-alanine + UDP-N-acetyl-alpha-D-glucosamine = di-trans,octa-cis-undecaprenyl diphospho-[N-acetyl-alpha-D-glucosaminyl-(1-&gt;4)]-N-acetyl-alpha-D-muramoyl-L-alanyl-D-glutamyl-meso-2,6-diaminopimeloyl-D-alanyl-D-alanine + UDP + H(+). It functions in the pathway cell wall biogenesis; peptidoglycan biosynthesis. Its function is as follows. Cell wall formation. Catalyzes the transfer of a GlcNAc subunit on undecaprenyl-pyrophosphoryl-MurNAc-pentapeptide (lipid intermediate I) to form undecaprenyl-pyrophosphoryl-MurNAc-(pentapeptide)GlcNAc (lipid intermediate II). This Maricaulis maris (strain MCS10) (Caulobacter maris) protein is UDP-N-acetylglucosamine--N-acetylmuramyl-(pentapeptide) pyrophosphoryl-undecaprenol N-acetylglucosamine transferase.